A 947-amino-acid polypeptide reads, in one-letter code: DNA mismatch repair protein MutS 2 (947 aa).

The segment at Ile623–Asp643 is disordered. Gly659–Ser666 is an ATP binding site. The interval Ala841–Glu916 is disordered.

This sequence belongs to the DNA mismatch repair MutS family.

Its function is as follows. This protein is involved in the repair of mismatches in DNA. It is possible that it carries out the mismatch recognition step. This protein has a weak ATPase activity. This Haloarcula marismortui (strain ATCC 43049 / DSM 3752 / JCM 8966 / VKM B-1809) (Halobacterium marismortui) protein is DNA mismatch repair protein MutS 2.